Reading from the N-terminus, the 68-residue chain is Conotoxin Lt5.2 (68 aa).

Positions 1–19 are cleaved as a signal peptide; that stretch reads MLCLPVFIILLLLASPAAP. A propeptide spanning residues 20–54 is cleaved from the precursor; it reads KSLETRIQNDLIRAGLTDADLKTEKGFLSGLLNVA.

The protein belongs to the conotoxin T superfamily. Post-translationally, contains 2 disulfide bonds that can be either 'C1-C3, C2-C4' or 'C1-C4, C2-C3', since these disulfide connectivities have been observed for conotoxins with cysteine framework V (for examples, see AC P0DQQ7 and AC P81755). In terms of tissue distribution, expressed by the venom duct.

It localises to the secreted. The polypeptide is Conotoxin Lt5.2 (Conus litteratus (Lettered cone)).